The chain runs to 109 residues: Large ribosomal subunit protein P1 (109 aa).

Positions 90–109 (AAAKKEEEEEDDDMGFGLFD) are disordered.

Belongs to the eukaryotic ribosomal protein P1/P2 family. P1 and P2 exist as dimers at the large ribosomal subunit.

Plays an important role in the elongation step of protein synthesis. This chain is Large ribosomal subunit protein P1, found in Trypanosoma cruzi.